The chain runs to 330 residues: Cathepsin S (330 aa).

The first 17 residues, 1–17, serve as a signal peptide directing secretion; that stretch reads MAVLGAPGVLCDNGATA. Residues 18-112 constitute a propeptide, activation peptide; it reads ERPTLDHHWD…GTLKSSSNQT (95 aa). Residues N100 and N110 are each glycosylated (N-linked (GlcNAc...) asparagine). 4 cysteine pairs are disulfide-bonded: C124-C222, C134-C179, C168-C211, and C271-C319. C137 is a catalytic residue. Catalysis depends on residues H277 and N297.

The protein belongs to the peptidase C1 family. As to quaternary structure, monomer. Highest levels occur in the ileum followed by spleen, brain, thyroid, ovary and uterus. Low levels are found in the liver, kidney, jejunum and lung with lowest levels in the heart.

The protein resides in the lysosome. The protein localises to the secreted. Its subcellular location is the cytoplasmic vesicle. It localises to the phagosome. The catalysed reaction is Similar to cathepsin L, but with much less activity on Z-Phe-Arg-|-NHMec, and more activity on the Z-Val-Val-Arg-|-Xaa compound.. Its function is as follows. Thiol protease. Key protease responsible for the removal of the invariant chain from MHC class II molecules and MHC class II antigen presentation. The bond-specificity of this proteinase is in part similar to the specificities of cathepsin L. The polypeptide is Cathepsin S (Ctss) (Rattus norvegicus (Rat)).